The primary structure comprises 317 residues: Carbonic anhydrase 6 (317 aa).

An N-terminal signal peptide occupies residues 1-17 (MRALVSVVSLFFLGIQA). The 259-residue stretch at 19-277 (SDWSYSGDDG…NNHRVVEANF (259 aa)) folds into the Alpha-carbonic anhydrase domain. A disulfide bridge connects residues Cys-41 and Cys-223. His-84 (proton donor/acceptor) is an active-site residue. The Zn(2+) site is built by His-110, His-112, and His-137. 219-220 (TT) contacts substrate. Asn-255 carries an N-linked (GlcNAc...) asparagine glycan.

This sequence belongs to the alpha-carbonic anhydrase family. Zn(2+) serves as cofactor. As to expression, major constituent of saliva.

The protein localises to the secreted. The enzyme catalyses hydrogencarbonate + H(+) = CO2 + H2O. In terms of biological role, reversible hydration of carbon dioxide. Its role in saliva is unknown. This Mus musculus (Mouse) protein is Carbonic anhydrase 6 (Ca6).